A 609-amino-acid chain; its full sequence is Glutamine--fructose-6-phosphate aminotransferase [isomerizing] (609 aa).

The Nucleophile; for GATase activity role is filled by Cys2. In terms of domain architecture, Glutamine amidotransferase type-2 spans 2–218; that stretch reads CGIVGAIAQR…EGDIAEITRR (217 aa). 2 consecutive SIS domains span residues 286–426 and 458–599; these read ADEL…LKGL and LAED…VDQP. Lys604 functions as the For Fru-6P isomerization activity in the catalytic mechanism.

In terms of assembly, homodimer.

The protein resides in the cytoplasm. The enzyme catalyses D-fructose 6-phosphate + L-glutamine = D-glucosamine 6-phosphate + L-glutamate. In terms of biological role, catalyzes the first step in hexosamine metabolism, converting fructose-6P into glucosamine-6P using glutamine as a nitrogen source. This chain is Glutamine--fructose-6-phosphate aminotransferase [isomerizing], found in Escherichia coli O6:H1 (strain CFT073 / ATCC 700928 / UPEC).